We begin with the raw amino-acid sequence, 319 residues long: Nucleotide-binding protein Mvan_2698 (319 aa).

Residues 1–12 (MTEQGMHQELRE) show a composition bias toward basic and acidic residues. A disordered region spans residues 1-26 (MTEQGMHQELREGAGTAGDEGGLEAA). 43-50 (GLSGAGRG) contacts ATP. GTP is bound at residue 94-97 (DVRS).

Belongs to the RapZ-like family.

Displays ATPase and GTPase activities. This chain is Nucleotide-binding protein Mvan_2698, found in Mycolicibacterium vanbaalenii (strain DSM 7251 / JCM 13017 / BCRC 16820 / KCTC 9966 / NRRL B-24157 / PYR-1) (Mycobacterium vanbaalenii).